The primary structure comprises 523 residues: AarF domain-containing protein kinase 1 (523 aa).

The Protein kinase domain maps to 148 to 484 (EFEEKPLGAA…SLWSYIHISL (337 aa)). ATP is bound by residues 154-162 (LGAASLAQV) and Lys176. The active-site Proton acceptor is Asp308.

The protein belongs to the protein kinase superfamily. ADCK protein kinase family.

It is found in the mitochondrion. Its function is as follows. Appears to be essential for maintaining mitochondrial cristae formation and mitochondrial function by acting via YME1L1 in a kinase-independent manner to regulate essential mitochondrial structural proteins OPA1 and IMMT. The action of this enzyme is not yet clear. It is not known if it has protein kinase activity and what type of substrate it would phosphorylate (Ser, Thr or Tyr). The protein is AarF domain-containing protein kinase 1 (adck1) of Xenopus tropicalis (Western clawed frog).